A 434-amino-acid polypeptide reads, in one-letter code: D-amino acid dehydrogenase (434 aa).

3 to 17 contributes to the FAD binding site; the sequence is VLVLGSGVIGTASAY.

It belongs to the DadA oxidoreductase family. FAD serves as cofactor.

The catalysed reaction is a D-alpha-amino acid + A + H2O = a 2-oxocarboxylate + AH2 + NH4(+). Its pathway is amino-acid degradation; D-alanine degradation; NH(3) and pyruvate from D-alanine: step 1/1. Oxidative deamination of D-amino acids. This is D-amino acid dehydrogenase from Pseudomonas putida (strain GB-1).